The following is a 268-amino-acid chain: HTH-type transcriptional activator RhaS (268 aa).

The HTH araC/xylS-type domain maps to 171 to 268 (RQMIRWLENN…YSIAPRELRI (98 aa)). DNA-binding regions (H-T-H motif) lie at residues 188–209 (EELAEKFALPIRTLHRYIKSQT) and 236–259 (IINIAYDCGFNDSSYFSTCFKNEY).

Binds DNA as a dimer.

The protein resides in the cytoplasm. Its function is as follows. Activates expression of the rhaBAD and rhaT operons. The polypeptide is HTH-type transcriptional activator RhaS (Mannheimia succiniciproducens (strain KCTC 0769BP / MBEL55E)).